The following is a 77-amino-acid chain: U8-lycotoxin-Ls1v (77 aa).

The first 20 residues, 1 to 20, serve as a signal peptide directing secretion; sequence MKLIIFTGLVLFGIVSLIEA. Positions 21 to 26 are excised as a propeptide; that stretch reads QAENEK.

Belongs to the neurotoxin 19 (CSTX) family. 08 (U8-Lctx) subfamily. In terms of processing, contains 4 disulfide bonds. As to expression, expressed by the venom gland.

Its subcellular location is the secreted. This Lycosa singoriensis (Wolf spider) protein is U8-lycotoxin-Ls1v.